The following is an 850-amino-acid chain: MRQVCCSALPPPPLEKGRCSSYSDSSSSSSERSSSSSSSSSESGSSSRSSSNNSSISRPAAPPEPRPQQQPQPRSPAARRAAARSRAAAAGGMRRDPAPGFSMLLFGVSLACYSPSLKSVQDQAYKAPVVVEGKVQGLVPAGGSSSNSTREPPASGRVALVKVLDKWPLRSGGLQREQVISVGSCVPLERNQRYIFFLEPTEQPLVFKTAFAPLDTNGKNLKKEVGKILCTDCATRPKLKKMKSQTGQVGEKQSLKCEAAAGNPQPSYRWFKDGKELNRSRDIRIKYGNGRKNSRLQFNKVKVEDAGEYVCEAENILGKDTVRGRLYVNSVSTTLSSWSGHARKCNETAKSYCVNGGVCYYIEGINQLSCKCPNGFFGQRCLEKLPLRLYMPDPKQKAEELYQKRVLTITGICVALLVVGIVCVVAYCKTKKQRKQMHNHLRQNMCPAHQNRSLANGPSHPRLDPEEIQMADYISKNVPATDHVIRRETETTFSGSHSCSPSHHCSTATPTSSHRHESHTWSLERSESLTSDSQSGIMLSSVGTSKCNSPACVEARARRAAAYNLEERRRATAPPYHDSVDSLRDSPHSERYVSALTTPARLSPVDFHYSLATQVPTFEITSPNSAHAVSLPPAAPISYRLAEQQPLLRHPAPPGPGPGPGPGPGPGADMQRSYDSYYYPAAGPGPRRGTCALGGSLGSLPASPFRIPEDDEYETTQECAPPPPPRPRARGASRRTSAGPRRWRRSRLNGLAAQRARAARDSLSLSSGSGGGSASASDDDADDADGALAAESTPFLGLRGAHDALRSDSPPLCPAADSRTYYSLDSHSTRASSRHSRGPPPRAKQDSAPL.

The tract at residues 1 to 96 is disordered; sequence MRQVCCSALP…AAAAGGMRRD (96 aa). Residues 1–111 constitute a propeptide that is removed on maturation; it reads MRQVCCSALP…SMLLFGVSLA (111 aa). Over residues 20–59 the composition is skewed to low complexity; the sequence is SSYSDSSSSSSERSSSSSSSSSESGSSSRSSSNNSSISRP. N-linked (GlcNAc...) asparagine glycans are attached at residues Asn52 and Asn53. The span at 60–74 shows a compositional bias: pro residues; that stretch reads AAPPEPRPQQQPQPR. Low complexity predominate over residues 75 to 92; that stretch reads SPAARRAAARSRAAAAGG. The Extracellular segment spans residues 112-405; that stretch reads CYSPSLKSVQ…QKAEELYQKR (294 aa). Asn147, Asn278, and Asn346 each carry an N-linked (GlcNAc...) asparagine glycan. The 96-residue stretch at 237 to 332 folds into the Ig-like C2-type domain; it reads PKLKKMKSQT…RGRLYVNSVS (96 aa). 4 disulfide bridges follow: Cys257/Cys311, Cys345/Cys359, Cys353/Cys370, and Cys372/Cys381. The region spanning 341 to 382 is the EGF-like domain; it reads HARKCNETAKSYCVNGGVCYYIEGINQLSCKCPNGFFGQRCL. Residues 406 to 426 form a helical membrane-spanning segment; sequence VLTITGICVALLVVGIVCVVA. Residues 427–850 lie on the Cytoplasmic side of the membrane; sequence YCKTKKQRKQ…PRAKQDSAPL (424 aa). Disordered regions lie at residues 492–535, 566–585, 647–681, 700–788, and 801–850; these read TFSG…DSQS, EERR…SLRD, LLRH…YYPA, LPAS…DGAL, and AHDA…SAPL. Residues 494-506 show a composition bias toward low complexity; it reads SGSHSCSPSHHCS. Over residues 514–527 the composition is skewed to basic and acidic residues; it reads HRHESHTWSLERSE. Pro residues predominate over residues 651 to 665; the sequence is PAPPGPGPGPGPGPG. The span at 750–767 shows a compositional bias: low complexity; the sequence is GLAAQRARAARDSLSLSS.

It belongs to the neuregulin family. Interacts with ERBB3 and ERBB4. Post-translationally, proteolytic cleavage close to the plasma membrane on the external face leads to the release of the soluble growth factor form. Extensive glycosylation precedes the proteolytic cleavage. As to expression, restricted to the cerebellum in the adult.

It localises to the cell membrane. The protein localises to the secreted. In terms of biological role, direct ligand for ERBB3 and ERBB4 tyrosine kinase receptors. Concomitantly recruits ERBB1 and ERBB2 coreceptors, resulting in ligand-stimulated tyrosine phosphorylation and activation of the ERBB receptors. May also promote the heterodimerization with the EGF receptor. In Homo sapiens (Human), this protein is Pro-neuregulin-2, membrane-bound isoform (NRG2).